A 233-amino-acid polypeptide reads, in one-letter code: 2-C-methyl-D-erythritol 4-phosphate cytidylyltransferase (233 aa).

Belongs to the IspD/TarI cytidylyltransferase family. IspD subfamily.

The catalysed reaction is 2-C-methyl-D-erythritol 4-phosphate + CTP + H(+) = 4-CDP-2-C-methyl-D-erythritol + diphosphate. It participates in isoprenoid biosynthesis; isopentenyl diphosphate biosynthesis via DXP pathway; isopentenyl diphosphate from 1-deoxy-D-xylulose 5-phosphate: step 2/6. Catalyzes the formation of 4-diphosphocytidyl-2-C-methyl-D-erythritol from CTP and 2-C-methyl-D-erythritol 4-phosphate (MEP). The polypeptide is 2-C-methyl-D-erythritol 4-phosphate cytidylyltransferase (Vibrio atlanticus (strain LGP32) (Vibrio splendidus (strain Mel32))).